Here is a 183-residue protein sequence, read N- to C-terminus: ATP synthase subunit b, chloroplastic (183 aa).

A helical membrane pass occupies residues 27–49 (LATNLINLTVVVGVLIYFGKGVL).

This sequence belongs to the ATPase B chain family. As to quaternary structure, F-type ATPases have 2 components, F(1) - the catalytic core - and F(0) - the membrane proton channel. F(1) has five subunits: alpha(3), beta(3), gamma(1), delta(1), epsilon(1). F(0) has four main subunits: a(1), b(1), b'(1) and c(10-14). The alpha and beta chains form an alternating ring which encloses part of the gamma chain. F(1) is attached to F(0) by a central stalk formed by the gamma and epsilon chains, while a peripheral stalk is formed by the delta, b and b' chains.

The protein localises to the plastid. It localises to the chloroplast thylakoid membrane. Functionally, f(1)F(0) ATP synthase produces ATP from ADP in the presence of a proton or sodium gradient. F-type ATPases consist of two structural domains, F(1) containing the extramembraneous catalytic core and F(0) containing the membrane proton channel, linked together by a central stalk and a peripheral stalk. During catalysis, ATP synthesis in the catalytic domain of F(1) is coupled via a rotary mechanism of the central stalk subunits to proton translocation. Its function is as follows. Component of the F(0) channel, it forms part of the peripheral stalk, linking F(1) to F(0). The polypeptide is ATP synthase subunit b, chloroplastic (Oryza nivara (Indian wild rice)).